The sequence spans 273 residues: Probable nicotinate-nucleotide pyrophosphorylase [carboxylating] (273 aa).

Substrate is bound by residues R91, T124 to K126, R148, K158, E188, D209, S235 to N237, and V256 to A258.

This sequence belongs to the NadC/ModD family. In terms of assembly, hexamer formed by 3 homodimers.

It carries out the reaction nicotinate beta-D-ribonucleotide + CO2 + diphosphate = quinolinate + 5-phospho-alpha-D-ribose 1-diphosphate + 2 H(+). Its pathway is cofactor biosynthesis; NAD(+) biosynthesis; nicotinate D-ribonucleotide from quinolinate: step 1/1. Functionally, involved in the catabolism of quinolinic acid (QA). This chain is Probable nicotinate-nucleotide pyrophosphorylase [carboxylating] (nadC), found in Helicobacter pylori (strain J99 / ATCC 700824) (Campylobacter pylori J99).